Consider the following 480-residue polypeptide: Probable glycine dehydrogenase (decarboxylating) subunit 2 (480 aa).

Residue lysine 265 is modified to N6-(pyridoxal phosphate)lysine.

The protein belongs to the GcvP family. C-terminal subunit subfamily. The glycine cleavage system is composed of four proteins: P, T, L and H. In this organism, the P 'protein' is a heterodimer of two subunits. Pyridoxal 5'-phosphate is required as a cofactor.

The catalysed reaction is N(6)-[(R)-lipoyl]-L-lysyl-[glycine-cleavage complex H protein] + glycine + H(+) = N(6)-[(R)-S(8)-aminomethyldihydrolipoyl]-L-lysyl-[glycine-cleavage complex H protein] + CO2. Its function is as follows. The glycine cleavage system catalyzes the degradation of glycine. The P protein binds the alpha-amino group of glycine through its pyridoxal phosphate cofactor; CO(2) is released and the remaining methylamine moiety is then transferred to the lipoamide cofactor of the H protein. In Thermosipho africanus (strain TCF52B), this protein is Probable glycine dehydrogenase (decarboxylating) subunit 2.